We begin with the raw amino-acid sequence, 264 residues long: Neuferricin (264 aa).

Residues 1-22 (MLRCGGRGLLLGLAVAAAAVMA) form the signal peptide. The Cytochrome b5 heme-binding domain maps to 35-134 (FRLFIPEELS…KNYVCVGRVT (100 aa)).

This sequence belongs to the cytochrome b5 family. MAPR subfamily.

The protein resides in the secreted. Its function is as follows. Heme-binding protein which promotes neuronal but not astrocyte differentiation. The polypeptide is Neuferricin (Homo sapiens (Human)).